The sequence spans 238 residues: MVDSMKFVEKAKIEFENPIVIEAFPGTGLVGSIAGFQIIKDLNLKYFGYFEVDGILPLTTIEKGIPYPPVRAYANKDFIILFSDIIISPFKINGLAEFIVKTFSNKNPKLFVSLGGIMAGKSEKVFGIANKEELIEDLKNYVEIFDFGVVGGMGGNLLIKCHDNGFDAIGLLAETVGIRPDPRGGANLLEVLNKMFNLNVNIENLIKEAEAIENKLKELAEQHLKMMSKSRKEYPMYI.

The next 3 membrane-spanning stretches (helical) occupy residues I19 to I39, I79 to I99, and Y141 to C161.

The protein localises to the cell membrane. This is an uncharacterized protein from Methanocaldococcus jannaschii (strain ATCC 43067 / DSM 2661 / JAL-1 / JCM 10045 / NBRC 100440) (Methanococcus jannaschii).